Here is a 662-residue protein sequence, read N- to C-terminus: Translation factor GUF1, mitochondrial (662 aa).

The transit peptide at 1–28 (MYIHSSRTVLARYGSRTPLLRPSVLGRY) directs the protein to the mitochondrion. Positions 62 to 244 (ENYRNFSIVA…AIVDHIPAPD (183 aa)) constitute a tr-type G domain. GTP contacts are provided by residues 71 to 78 (AHVDHGKS), 137 to 141 (DTPGH), and 191 to 194 (NKID).

It belongs to the TRAFAC class translation factor GTPase superfamily. Classic translation factor GTPase family. LepA subfamily.

Its subcellular location is the mitochondrion inner membrane. It carries out the reaction GTP + H2O = GDP + phosphate + H(+). In terms of biological role, promotes mitochondrial protein synthesis. May act as a fidelity factor of the translation reaction, by catalyzing a one-codon backward translocation of tRNAs on improperly translocated ribosomes. Binds to mitochondrial ribosomes in a GTP-dependent manner. This chain is Translation factor GUF1, mitochondrial, found in Meyerozyma guilliermondii (strain ATCC 6260 / CBS 566 / DSM 6381 / JCM 1539 / NBRC 10279 / NRRL Y-324) (Yeast).